The chain runs to 563 residues: NAD-dependent malic enzyme (563 aa).

Tyr101 acts as the Proton donor in catalysis. Arg154 is an NAD(+) binding site. The active-site Proton acceptor is Lys172. The a divalent metal cation site is built by Glu243, Asp244, and Asp267. The NAD(+) site is built by Asp267 and Asn416.

This sequence belongs to the malic enzymes family. In terms of assembly, homotetramer. Mg(2+) is required as a cofactor. It depends on Mn(2+) as a cofactor.

The catalysed reaction is (S)-malate + NAD(+) = pyruvate + CO2 + NADH. The enzyme catalyses oxaloacetate + H(+) = pyruvate + CO2. The chain is NAD-dependent malic enzyme from Pseudomonas savastanoi pv. phaseolicola (strain 1448A / Race 6) (Pseudomonas syringae pv. phaseolicola (strain 1448A / Race 6)).